The following is an 837-amino-acid chain: Granulocyte colony-stimulating factor receptor (837 aa).

The first 25 residues, 1-25, serve as a signal peptide directing secretion; that stretch reads MVGLGACTLTGVTLIFLLLPRSLES. Cystine bridges form between C26-C52 and C46-C102. Residues 26 to 118 form the Ig-like C2-type domain; it reads CGHIEISPPV…SVQLLDQAEL (93 aa). Topologically, residues 26–626 are extracellular; the sequence is CGHIEISPPV…LTLRTLDPSD (601 aa). N-linked (GlcNAc...) asparagine glycosylation is found at N51, N94, and N129. Fibronectin type-III domains follow at residues 126–231, 236–331, 334–433, 434–529, and 530–624; these read SPSN…LEPP, LDIG…LRPT, APTI…NEGP, AVTG…GERA, and PPHA…TLDP. Disulfide bonds link C132-C143, C168-C219, C178-C187, C249-C296, and C267-C310. N-linked (GlcNAc...) asparagine glycans are attached at residues N186 and N279. Residues 319–323 carry the WSXWS motif motif; the sequence is WSPWS. N392, N408, N474, N487, N582, and N613 each carry an N-linked (GlcNAc...) asparagine glycan. The chain crosses the membrane as a helical span at residues 627 to 650; that stretch reads LNIFLGILCLVLLSTTCVVTWLCC. Residues 651–837 lie on the Cytoplasmic side of the membrane; the sequence is KRRGKTSFWS…VHGVEEQGGF (187 aa). Positions 658 to 666 match the Box 1 motif motif; that stretch reads FWSDVPDPA.

This sequence belongs to the type I cytokine receptor family. Type 2 subfamily. Homodimer. The dimeric receptor binds two CSF3 molecules. Interacts with CEACAM1; down-regulates the CSF3R-STAT3 pathway through recruitment of PTPN6 that dephosphorylates CSF3R. In terms of processing, N-glycosylated. As to expression, found in bone marrow.

It is found in the membrane. Its function is as follows. Receptor for granulocyte colony-stimulating factor (CSF3). In addition it may function in some adhesion or recognition events at the cell surface. The protein is Granulocyte colony-stimulating factor receptor (Csf3r) of Mus musculus (Mouse).